A 295-amino-acid chain; its full sequence is CCAAT-binding factor complex subunit php4 (295 aa).

Low complexity predominate over residues 1-19 (MESSKSPSEVEKSSSASPA). The segment at 1 to 69 (MESSKSPSEV…GPTSALSVEE (69 aa)) is disordered. Residues 73–111 (RVREKQYQDTIGKLQKENNELLEQLEMLQAQLKNSTLDS) adopt a coiled-coil conformation. The short motif at 93-100 (LLEQLEML) is the Nuclear export signal element. Positions 108-130 (TLDSPKEVEVNSEVVKPDSATTE) are disordered.

As to quaternary structure, component of tha CCAAT-binding complex composed of at least php2, php3, php4 and php5. Interacts with crm1 and grx4.

The protein resides in the cytoplasm. It is found in the nucleus. Its subcellular location is the cytoskeleton. The protein localises to the spindle pole. In terms of biological role, component of the transcription regulatory CCAAT-binding complex. Required for the reprogramming of the cell for iron use. Down-regulates pcl1, sdh4, and isa1 underlow-iron conditions. This Schizosaccharomyces pombe (strain 972 / ATCC 24843) (Fission yeast) protein is CCAAT-binding factor complex subunit php4 (php4).